A 790-amino-acid polypeptide reads, in one-letter code: Vacuolar protein sorting-associated protein 35C (790 aa).

Met-1 is subject to N-acetylmethionine.

This sequence belongs to the VPS35 family. Component of the retromer complex which consists of VPS29 (MAG1), VPS26 (VPS26A or VPS26B), VPS35 (VPS35A or VPS35B or VPS35C), VPS5/17 (SNX1 or SNX2A or SNX2B). Component of a retromer subcomplex consisting of VPS29 (MAG1), VPS26 (VPS26A or VPS26B), VPS35 (VPS35A or VPS35B or VPS35C).

Its subcellular location is the cytoplasm. It localises to the endosome membrane. It is found in the prevacuolar compartment membrane. The protein resides in the golgi apparatus. The protein localises to the trans-Golgi network membrane. In terms of biological role, plays a role in vesicular protein sorting. Component of the membrane-associated retromer complex which is essential in endosome-to-Golgi retrograde transport. Also involved in the efficient sorting of seed storage proteins. The VPS29-VPS26-VPS35 subcomplex may be involved in recycling of specific cargos from endosome to the plasma membrane. This Arabidopsis thaliana (Mouse-ear cress) protein is Vacuolar protein sorting-associated protein 35C (VPS35C).